A 506-amino-acid polypeptide reads, in one-letter code: MNIITLTPGQLSLSQLHDIWRHPVQICLDASAIDSINASVACVNDIVAEGRTAYGINTGFGLLAQTRIADEDLQNLQRSLVLSHAAGVGDPLDDAMVRLIMVLKINSLARGFSGIRLSVIEALIALVNAGVYPLIPAKGSVGASGDLAPLAHLSLTLLGEGKARWQGEWLPAQTALKKAGLEPVALAAKEGLALLNGTQASTAFALRGLFEAQELFASAVVCGALTTEAVLGSRRPFDARIHAARGQQGQIDAARLFRHLLTETSAIAESHHHCNKVQDPYSLRCQPQVMGACLTQLRQTKEVLLVEANAVSDNPLVFADAGEVISGGNFHAEPVAMAADNLALAIAEIGALSERRIALMMDKHMSQLPPFLVKNGGVNSGFMIAQVTAAALASENKALAHPHSVDSLPTSANQEDHVSMAPAAGRRLWEMAANTRGVIAVEWLAACQGIDLREGLTSSPLLEQARQALREQVAHYTQDRFFAPDIACATALLAQGALQRLVPDFM.

Residues 143–145 (ASG) constitute a cross-link (5-imidazolinone (Ala-Gly)). S144 carries the 2,3-didehydroalanine (Ser) modification.

It belongs to the PAL/histidase family. In terms of processing, contains an active site 4-methylidene-imidazol-5-one (MIO), which is formed autocatalytically by cyclization and dehydration of residues Ala-Ser-Gly.

It is found in the cytoplasm. It carries out the reaction L-histidine = trans-urocanate + NH4(+). It functions in the pathway amino-acid degradation; L-histidine degradation into L-glutamate; N-formimidoyl-L-glutamate from L-histidine: step 1/3. The sequence is that of Histidine ammonia-lyase from Salmonella arizonae (strain ATCC BAA-731 / CDC346-86 / RSK2980).